The primary structure comprises 74 residues: ATP synthase subunit 9, mitochondrial (74 aa).

A run of 2 helical transmembrane segments spans residues 8 to 28 (IGAG…GLIF) and 50 to 70 (ILGF…AFLI).

The protein belongs to the ATPase C chain family. As to quaternary structure, F-type ATPases have 2 components, CF(1) - the catalytic core - and CF(0) - the membrane proton channel. CF(1) has five subunits: alpha(3), beta(3), gamma(1), delta(1), epsilon(1). CF(0) has three main subunits: a, b and c.

It localises to the mitochondrion membrane. In terms of biological role, mitochondrial membrane ATP synthase (F(1)F(0) ATP synthase or Complex V) produces ATP from ADP in the presence of a proton gradient across the membrane which is generated by electron transport complexes of the respiratory chain. F-type ATPases consist of two structural domains, F(1) - containing the extramembraneous catalytic core and F(0) - containing the membrane proton channel, linked together by a central stalk and a peripheral stalk. During catalysis, ATP synthesis in the catalytic domain of F(1) is coupled via a rotary mechanism of the central stalk subunits to proton translocation. Part of the complex F(0) domain. A homomeric c-ring of probably 10 subunits is part of the complex rotary element. The chain is ATP synthase subunit 9, mitochondrial (atp9) from Schizosaccharomyces pombe (strain 972 / ATCC 24843) (Fission yeast).